Reading from the N-terminus, the 40-residue chain is Photosystem II reaction center protein J (40 aa).

The helical transmembrane segment at 8-28 (IPLWLVGTVAGILVIGLIGIF) threads the bilayer.

The protein belongs to the PsbJ family. In terms of assembly, PSII is composed of 1 copy each of membrane proteins PsbA, PsbB, PsbC, PsbD, PsbE, PsbF, PsbH, PsbI, PsbJ, PsbK, PsbL, PsbM, PsbT, PsbX, PsbY, PsbZ, Psb30/Ycf12, at least 3 peripheral proteins of the oxygen-evolving complex and a large number of cofactors. It forms dimeric complexes.

Its subcellular location is the plastid. The protein localises to the chloroplast thylakoid membrane. One of the components of the core complex of photosystem II (PSII). PSII is a light-driven water:plastoquinone oxidoreductase that uses light energy to abstract electrons from H(2)O, generating O(2) and a proton gradient subsequently used for ATP formation. It consists of a core antenna complex that captures photons, and an electron transfer chain that converts photonic excitation into a charge separation. This chain is Photosystem II reaction center protein J, found in Gnetum parvifolium (Small-leaved jointfir).